We begin with the raw amino-acid sequence, 351 residues long: DNA polymerase IV (351 aa).

The UmuC domain maps to 4–185; it reads IIHVDMDCFF…LPLAKIPGVG (182 aa). Mg(2+) is bound by residues Asp8 and Asp103. Residue Glu104 is part of the active site.

Belongs to the DNA polymerase type-Y family. In terms of assembly, monomer. It depends on Mg(2+) as a cofactor.

The protein resides in the cytoplasm. The catalysed reaction is DNA(n) + a 2'-deoxyribonucleoside 5'-triphosphate = DNA(n+1) + diphosphate. Functionally, poorly processive, error-prone DNA polymerase involved in untargeted mutagenesis. Copies undamaged DNA at stalled replication forks, which arise in vivo from mismatched or misaligned primer ends. These misaligned primers can be extended by PolIV. Exhibits no 3'-5' exonuclease (proofreading) activity. May be involved in translesional synthesis, in conjunction with the beta clamp from PolIII. The polypeptide is DNA polymerase IV (Escherichia coli O157:H7).